A 208-amino-acid chain; its full sequence is MKVVEVKHPLVRHKIGLMRAGDISTKRFRELAAEVGSLLTYEATADFATETVTIEGWNGPVEIEQIKGKKVTVVPILRAGLGMMDGVLENIPSARISVVGMYRDEETLEPVPYFEKLASDMPSRIALVVDPMLATGGSMISTIDLLKDRGCTEIKALVLVAAPEGVEALQKAHPDVELYTASIDRCLNEQGYILPGLGDAGDKIFGTK.

5-phospho-alpha-D-ribose 1-diphosphate contacts are provided by residues arginine 78, arginine 103, and 130-138; that span reads DPMLATGGS. Uracil-binding positions include isoleucine 193 and 198–200; that span reads GDA. Aspartate 199 is a binding site for 5-phospho-alpha-D-ribose 1-diphosphate.

Belongs to the UPRTase family. Mg(2+) serves as cofactor.

The catalysed reaction is UMP + diphosphate = 5-phospho-alpha-D-ribose 1-diphosphate + uracil. Its pathway is pyrimidine metabolism; UMP biosynthesis via salvage pathway; UMP from uracil: step 1/1. With respect to regulation, allosterically activated by GTP. Catalyzes the conversion of uracil and 5-phospho-alpha-D-ribose 1-diphosphate (PRPP) to UMP and diphosphate. The sequence is that of Uracil phosphoribosyltransferase from Shewanella sediminis (strain HAW-EB3).